A 360-amino-acid polypeptide reads, in one-letter code: Peptide chain release factor 1 (360 aa).

Position 235 is an N5-methylglutamine (Gln235).

This sequence belongs to the prokaryotic/mitochondrial release factor family. Methylated by PrmC. Methylation increases the termination efficiency of RF1.

It localises to the cytoplasm. In terms of biological role, peptide chain release factor 1 directs the termination of translation in response to the peptide chain termination codons UAG and UAA. This Mannheimia succiniciproducens (strain KCTC 0769BP / MBEL55E) protein is Peptide chain release factor 1.